Reading from the N-terminus, the 157-residue chain is ATP synthase subunit b' (157 aa).

The chain crosses the membrane as a helical span at residues 22-42; sequence ATLPLIAIQFLLLVAVLNSLF.

It belongs to the ATPase B chain family. As to quaternary structure, F-type ATPases have 2 components, F(1) - the catalytic core - and F(0) - the membrane proton channel. F(1) has five subunits: alpha(3), beta(3), gamma(1), delta(1), epsilon(1). F(0) has four main subunits: a(1), b(1), b'(1) and c(10-14). The alpha and beta chains form an alternating ring which encloses part of the gamma chain. F(1) is attached to F(0) by a central stalk formed by the gamma and epsilon chains, while a peripheral stalk is formed by the delta, b and b' chains.

It localises to the cellular thylakoid membrane. F(1)F(0) ATP synthase produces ATP from ADP in the presence of a proton or sodium gradient. F-type ATPases consist of two structural domains, F(1) containing the extramembraneous catalytic core and F(0) containing the membrane proton channel, linked together by a central stalk and a peripheral stalk. During catalysis, ATP synthesis in the catalytic domain of F(1) is coupled via a rotary mechanism of the central stalk subunits to proton translocation. Functionally, component of the F(0) channel, it forms part of the peripheral stalk, linking F(1) to F(0). The b'-subunit is a diverged and duplicated form of b found in plants and photosynthetic bacteria. The polypeptide is ATP synthase subunit b' (Synechococcus sp. (strain JA-2-3B'a(2-13)) (Cyanobacteria bacterium Yellowstone B-Prime)).